The chain runs to 285 residues: MFKDFFNRSKKKKYLTVQDSKQNDVPAGIMTKCPNCKKIMYTKELNENLNVCFNCDHHIALTAYKRIEAISDDGSFIEFDRGMTSANPLDFPGYEEKIEKDQQKTGLNEALVSGTAKLDGIQYGVAVMDARFRMGSMGSVVGEKICRIIDYCTEHRLPFILFSASGGARMQEGIISLMQMGKTSVSLKRHSDAGLLYISYITNPTTGGVSASFASVGDINLSEPKALIGFAGRRVIEQTINEKLPDDFQTAEFLLEHGQLDKVIHRKDMRETLSNILKIHQEVSN.

One can recognise a CoA carboxyltransferase N-terminal domain in the interval 29-285; sequence IMTKCPNCKK…ILKIHQEVSN (257 aa). Residues cysteine 33, cysteine 36, cysteine 52, and cysteine 55 each contribute to the Zn(2+) site. A C4-type zinc finger spans residues 33–55; sequence CPNCKKIMYTKELNENLNVCFNC.

Belongs to the AccD/PCCB family. In terms of assembly, acetyl-CoA carboxylase is a heterohexamer composed of biotin carboxyl carrier protein (AccB), biotin carboxylase (AccC) and two subunits each of ACCase subunit alpha (AccA) and ACCase subunit beta (AccD). Zn(2+) serves as cofactor.

The protein resides in the cytoplasm. It catalyses the reaction N(6)-carboxybiotinyl-L-lysyl-[protein] + acetyl-CoA = N(6)-biotinyl-L-lysyl-[protein] + malonyl-CoA. It functions in the pathway lipid metabolism; malonyl-CoA biosynthesis; malonyl-CoA from acetyl-CoA: step 1/1. In terms of biological role, component of the acetyl coenzyme A carboxylase (ACC) complex. Biotin carboxylase (BC) catalyzes the carboxylation of biotin on its carrier protein (BCCP) and then the CO(2) group is transferred by the transcarboxylase to acetyl-CoA to form malonyl-CoA. The polypeptide is Acetyl-coenzyme A carboxylase carboxyl transferase subunit beta (Staphylococcus epidermidis (strain ATCC 35984 / DSM 28319 / BCRC 17069 / CCUG 31568 / BM 3577 / RP62A)).